We begin with the raw amino-acid sequence, 557 residues long: Neurofilament light polypeptide (557 aa).

S2 is modified (N-acetylserine). The head stretch occupies residues 2-89 (SSYSYDPYYT…KIVRTQEKAQ (88 aa)). The region spanning 86 to 396 (EKAQLQDLND…KLLEGEETRL (311 aa)) is the IF rod domain. The segment at 90–121 (LQDLNDRFANFIERVHELEQRNKVLEAELLLL) is coil 1A. The linker 1 stretch occupies residues 122–134 (RQKHNEPSRLRDL). The segment at 135–230 (YEQEVRELRL…KVHEEELAQL (96 aa)) is coil 1B. Residues 231 to 248 (QSQVQYAQISLEVEVAKP) form a linker 12 region. A coil 2A region spans residues 249–267 (DLSSALRDIRAQYEKLAAK). A linker 2 region spans residues 268–276 (NMQSAEDWF). The interval 277 to 392 (KSRFTVLTQS…AAYRKLLEGE (116 aa)) is coil 2B. The tract at residues 393–437 (ETRLSFSGVGAITSGYTQSAPVFGRSAYSLQSSSYMTSRAFPTYY) is tail, subdomain A. The interval 393–557 (ETRLSFSGVG…KKKKKKKKKK (165 aa)) is tail. The segment at 438–557 (SSHVQEEQLD…KKKKKKKKKK (120 aa)) is tail, subdomain B (acidic). The segment at 452–557 (IESSRAEEAK…KKKKKKKKKK (106 aa)) is disordered. A compositionally biased stretch (basic and acidic residues) spans 453-464 (ESSRAEEAKAEA). A compositionally biased stretch (acidic residues) spans 465–538 (PEEEEEEAGE…GEGEEEEEGK (74 aa)). A compositionally biased stretch (basic and acidic residues) spans 539–548 (GEEPAEEESK).

Belongs to the intermediate filament family. As to quaternary structure, forms homodimers (in vitro).

The protein resides in the cell projection. Its subcellular location is the axon. It is found in the cytoplasm. It localises to the cytoskeleton. Functionally, neurofilaments usually contain three intermediate filament proteins: NEFL, NEFM, and NEFH which are involved in the maintenance of neuronal caliber. May additionally cooperate with other neuronal intermediate filament proteins to form neuronal filamentous networks. The chain is Neurofilament light polypeptide (nefl) from Xenopus tropicalis (Western clawed frog).